Reading from the N-terminus, the 344-residue chain is 5-formaminoimidazole-4-carboxamide-1-(beta)-D-ribofuranosyl 5'-monophosphate synthetase (344 aa).

5-amino-1-(5-phospho-beta-D-ribosyl)imidazole-4-carboxamide-binding residues include H31 and S96. The 195-residue stretch at 130–324 (MELLQRAGVP…YFDRPMDMGE (195 aa)) folds into the ATP-grasp domain. ATP-binding positions include 153-198 (PVIV…VPAY) and E220. Residue N240 coordinates 5-amino-1-(5-phospho-beta-D-ribosyl)imidazole-4-carboxamide. E279 and E292 together coordinate Mg(2+).

The protein belongs to the phosphohexose mutase family. Mg(2+) is required as a cofactor. It depends on Mn(2+) as a cofactor.

It catalyses the reaction 5-amino-1-(5-phospho-beta-D-ribosyl)imidazole-4-carboxamide + formate + ATP = 5-formamido-1-(5-phospho-D-ribosyl)imidazole-4-carboxamide + ADP + phosphate. It functions in the pathway purine metabolism; IMP biosynthesis via de novo pathway; 5-formamido-1-(5-phospho-D-ribosyl)imidazole-4-carboxamide from 5-amino-1-(5-phospho-D-ribosyl)imidazole-4-carboxamide (formate route): step 1/1. In terms of biological role, catalyzes the ATP- and formate-dependent formylation of 5-aminoimidazole-4-carboxamide-1-beta-d-ribofuranosyl 5'-monophosphate (AICAR) to 5-formaminoimidazole-4-carboxamide-1-beta-d-ribofuranosyl 5'-monophosphate (FAICAR) in the absence of folates. This chain is 5-formaminoimidazole-4-carboxamide-1-(beta)-D-ribofuranosyl 5'-monophosphate synthetase, found in Pyrobaculum neutrophilum (strain DSM 2338 / JCM 9278 / NBRC 100436 / V24Sta) (Thermoproteus neutrophilus).